Here is a 693-residue protein sequence, read N- to C-terminus: Glycine--tRNA ligase beta subunit (693 aa).

Belongs to the class-II aminoacyl-tRNA synthetase family. In terms of assembly, tetramer of two alpha and two beta subunits.

It localises to the cytoplasm. The catalysed reaction is tRNA(Gly) + glycine + ATP = glycyl-tRNA(Gly) + AMP + diphosphate. The chain is Glycine--tRNA ligase beta subunit from Ligilactobacillus salivarius (strain UCC118) (Lactobacillus salivarius).